We begin with the raw amino-acid sequence, 350 residues long: Ketol-acid reductoisomerase (NADP(+)) (350 aa).

Residues 4–187 (VSITTDYSRM…GGARANIIKT (184 aa)) form the KARI N-terminal Rossmann domain. Residues 30-33 (YGSQ), Arg-53, Thr-58, and 88-91 (DMVQ) contribute to the NADP(+) site. The active site involves His-113. Gly-139 serves as a coordination point for NADP(+). One can recognise a KARI C-terminal knotted domain in the interval 188–333 (TFKEETETDL…KQLRAKMVWL (146 aa)). 4 residues coordinate Mg(2+): Asp-196, Glu-200, Glu-232, and Glu-236. Ser-257 serves as a coordination point for substrate.

Belongs to the ketol-acid reductoisomerase family. Requires Mg(2+) as cofactor.

It catalyses the reaction (2R)-2,3-dihydroxy-3-methylbutanoate + NADP(+) = (2S)-2-acetolactate + NADPH + H(+). The enzyme catalyses (2R,3R)-2,3-dihydroxy-3-methylpentanoate + NADP(+) = (S)-2-ethyl-2-hydroxy-3-oxobutanoate + NADPH + H(+). Its pathway is amino-acid biosynthesis; L-isoleucine biosynthesis; L-isoleucine from 2-oxobutanoate: step 2/4. It participates in amino-acid biosynthesis; L-valine biosynthesis; L-valine from pyruvate: step 2/4. In terms of biological role, involved in the biosynthesis of branched-chain amino acids (BCAA). Catalyzes an alkyl-migration followed by a ketol-acid reduction of (S)-2-acetolactate (S2AL) to yield (R)-2,3-dihydroxy-isovalerate. In the isomerase reaction, S2AL is rearranged via a Mg-dependent methyl migration to produce 3-hydroxy-3-methyl-2-ketobutyrate (HMKB). In the reductase reaction, this 2-ketoacid undergoes a metal-dependent reduction by NADPH to yield (R)-2,3-dihydroxy-isovalerate. The sequence is that of Ketol-acid reductoisomerase (NADP(+)) from Xylella fastidiosa (strain 9a5c).